A 508-amino-acid chain; its full sequence is Light-independent protochlorophyllide reductase subunit B (508 aa).

Residue Asp-36 participates in [4Fe-4S] cluster binding. Asp-294 acts as the Proton donor in catalysis. A substrate-binding site is contributed by 429–430 (GM).

The protein belongs to the ChlB/BchB/BchZ family. In terms of assembly, protochlorophyllide reductase is composed of three subunits; ChlL, ChlN and ChlB. Forms a heterotetramer of two ChlB and two ChlN subunits. [4Fe-4S] cluster serves as cofactor.

The enzyme catalyses chlorophyllide a + oxidized 2[4Fe-4S]-[ferredoxin] + 2 ADP + 2 phosphate = protochlorophyllide a + reduced 2[4Fe-4S]-[ferredoxin] + 2 ATP + 2 H2O. The protein operates within porphyrin-containing compound metabolism; chlorophyll biosynthesis (light-independent). In terms of biological role, component of the dark-operative protochlorophyllide reductase (DPOR) that uses Mg-ATP and reduced ferredoxin to reduce ring D of protochlorophyllide (Pchlide) to form chlorophyllide a (Chlide). This reaction is light-independent. The NB-protein (ChlN-ChlB) is the catalytic component of the complex. In Thermosynechococcus vestitus (strain NIES-2133 / IAM M-273 / BP-1), this protein is Light-independent protochlorophyllide reductase subunit B.